The following is a 320-amino-acid chain: Arabinan endo-1,5-alpha-L-arabinosidase C (320 aa).

The first 15 residues, 1–15, serve as a signal peptide directing secretion; it reads MKLALSLFLLSGSLA. The active-site Proton acceptor is Asp31. N-linked (GlcNAc...) asparagine glycosylation is found at Asn126 and Asn190. Glu198 functions as the Proton donor in the catalytic mechanism.

Belongs to the glycosyl hydrolase 43 family.

Its subcellular location is the secreted. It carries out the reaction Endohydrolysis of (1-&gt;5)-alpha-arabinofuranosidic linkages in (1-&gt;5)-arabinans.. It participates in glycan metabolism; L-arabinan degradation. Its function is as follows. Endo-1,5-alpha-L-arabinanase involved in degradation of pectin. Its preferred substrate is linear 1,5-alpha-L-arabinan. This Emericella nidulans (strain FGSC A4 / ATCC 38163 / CBS 112.46 / NRRL 194 / M139) (Aspergillus nidulans) protein is Arabinan endo-1,5-alpha-L-arabinosidase C (abnC).